Consider the following 491-residue polypeptide: Phosphatidylglycerol--prolipoprotein diacylglyceryl transferase (491 aa).

The next 3 helical transmembrane spans lie at 24–44, 58–78, and 98–118; these read IPLR…IWWG, VLDV…AYHV, and IWQG…GAWI. Arg146 serves as a coordination point for a 1,2-diacyl-sn-glycero-3-phospho-(1'-sn-glycerol). The next 2 membrane-spanning stretches (helical) occupy residues 192-212 and 256-276; these read IVHP…IALV and INNF…VFAT. Over residues 309–323 the composition is skewed to low complexity; sequence NGPAEPGATASTATD. Residues 309–491 are disordered; the sequence is NGPAEPGATA…DRVDSGENDA (183 aa). Residues 347-360 are compositionally biased toward basic and acidic residues; the sequence is KGDRGTADAADTAK. Low complexity-rich tracts occupy residues 361–387, 394–406, and 415–438; these read DASA…GSSD, AVKA…AAEK, and AGEA…SAKS. Positions 453–462 are enriched in basic and acidic residues; sequence NESESTRDNE. A compositionally biased stretch (low complexity) spans 463–481; the sequence is STSAGTAASATGSAGAGAT. The span at 482 to 491 shows a compositional bias: basic and acidic residues; it reads DRVDSGENDA.

The protein belongs to the Lgt family.

It is found in the cell membrane. It catalyses the reaction L-cysteinyl-[prolipoprotein] + a 1,2-diacyl-sn-glycero-3-phospho-(1'-sn-glycerol) = an S-1,2-diacyl-sn-glyceryl-L-cysteinyl-[prolipoprotein] + sn-glycerol 1-phosphate + H(+). The protein operates within protein modification; lipoprotein biosynthesis (diacylglyceryl transfer). In terms of biological role, catalyzes the transfer of the diacylglyceryl group from phosphatidylglycerol to the sulfhydryl group of the N-terminal cysteine of a prolipoprotein, the first step in the formation of mature lipoproteins. The chain is Phosphatidylglycerol--prolipoprotein diacylglyceryl transferase from Nocardia farcinica (strain IFM 10152).